The following is a 95-amino-acid chain: MSRSSKKGPYVDVRLLGRIEELNRANEKRVLRTWSRDSTIFPQMVGHTIAVHDGRRHVPVYITENMVGHKLGEFAPTRLFRGHGGKKVDKRGKMK.

The protein belongs to the universal ribosomal protein uS19 family.

Its function is as follows. Protein S19 forms a complex with S13 that binds strongly to the 16S ribosomal RNA. This chain is Small ribosomal subunit protein uS19, found in Roseiflexus castenholzii (strain DSM 13941 / HLO8).